We begin with the raw amino-acid sequence, 452 residues long: Serine carboxypeptidase-like 26 (452 aa).

An N-terminal signal peptide occupies residues 1–20 (MARLLLLFFFFLILLHYASC). Residues Asn52 and Asn138 are each glycosylated (N-linked (GlcNAc...) asparagine). Cystine bridges form between Cys87–Cys338, Cys244–Cys256, and Cys280–Cys306. Ser180 is a catalytic residue. An N-linked (GlcNAc...) asparagine glycan is attached at Asn327. Residues Asp375 and His427 contribute to the active site.

The protein belongs to the peptidase S10 family. Ubiquitous.

It is found in the secreted. In terms of biological role, probable carboxypeptidase. The chain is Serine carboxypeptidase-like 26 (SCPL26) from Arabidopsis thaliana (Mouse-ear cress).